Reading from the N-terminus, the 206-residue chain is Holliday junction branch migration complex subunit RuvA (206 aa).

The tract at residues 1 to 64 (MIGKLKGTVD…EDQIRLFGFV (64 aa)) is domain I. The interval 65 to 143 (TEAEREWFRL…AFTAADPGLA (79 aa)) is domain II. The flexible linker stretch occupies residues 144-154 (RLAADVEATEA). The interval 154–206 (AAGGALADAVSALVNLGYGQAQAHTAIAAAGRKAGEDATTETLIRLGLKELAK) is domain III.

It belongs to the RuvA family. In terms of assembly, homotetramer. Forms an RuvA(8)-RuvB(12)-Holliday junction (HJ) complex. HJ DNA is sandwiched between 2 RuvA tetramers; dsDNA enters through RuvA and exits via RuvB. An RuvB hexamer assembles on each DNA strand where it exits the tetramer. Each RuvB hexamer is contacted by two RuvA subunits (via domain III) on 2 adjacent RuvB subunits; this complex drives branch migration. In the full resolvosome a probable DNA-RuvA(4)-RuvB(12)-RuvC(2) complex forms which resolves the HJ.

Its subcellular location is the cytoplasm. Its function is as follows. The RuvA-RuvB-RuvC complex processes Holliday junction (HJ) DNA during genetic recombination and DNA repair, while the RuvA-RuvB complex plays an important role in the rescue of blocked DNA replication forks via replication fork reversal (RFR). RuvA specifically binds to HJ cruciform DNA, conferring on it an open structure. The RuvB hexamer acts as an ATP-dependent pump, pulling dsDNA into and through the RuvAB complex. HJ branch migration allows RuvC to scan DNA until it finds its consensus sequence, where it cleaves and resolves the cruciform DNA. In Azorhizobium caulinodans (strain ATCC 43989 / DSM 5975 / JCM 20966 / LMG 6465 / NBRC 14845 / NCIMB 13405 / ORS 571), this protein is Holliday junction branch migration complex subunit RuvA.